The following is a 356-amino-acid chain: Heme A synthase (356 aa).

The next 5 helical transmembrane spans lie at 24–44 (IAIW…VGGV), 106–126 (FHRL…VYFM), 139–159 (LLGI…MVMS), 174–194 (AHLG…TGLI), and 214–234 (AWML…VAGI). H276 is a heme binding site. A run of 3 helical transmembrane segments spans residues 278 to 298 (LIAW…KQLS), 309 to 329 (LLLL…LLSV), and 331 to 351 (LTFA…ALWV). H337 is a binding site for heme.

It belongs to the COX15/CtaA family. Type 2 subfamily. Interacts with CtaB. The cofactor is heme b.

The protein resides in the cell membrane. It carries out the reaction Fe(II)-heme o + 2 A + H2O = Fe(II)-heme a + 2 AH2. The protein operates within porphyrin-containing compound metabolism; heme A biosynthesis; heme A from heme O: step 1/1. In terms of biological role, catalyzes the conversion of heme O to heme A by two successive hydroxylations of the methyl group at C8. The first hydroxylation forms heme I, the second hydroxylation results in an unstable dihydroxymethyl group, which spontaneously dehydrates, resulting in the formyl group of heme A. This chain is Heme A synthase, found in Nitrosomonas eutropha (strain DSM 101675 / C91 / Nm57).